We begin with the raw amino-acid sequence, 266 residues long: Zinc transport system ATP-binding protein TroB (266 aa).

One can recognise an ABC transporter domain in the interval 11–243 (VQVDDLTLAY…YVQRAYGGRI (233 aa)). An ATP-binding site is contributed by 43-50 (GPNGAGKS).

This sequence belongs to the ABC transporter superfamily.

Functionally, part of an ATP-driven transport system TroABCD for zinc. This is Zinc transport system ATP-binding protein TroB (troB) from Treponema pallidum (strain Nichols).